The primary structure comprises 546 residues: ATP-dependent rRNA helicase RRP3 (546 aa).

The interval M1–A108 is disordered. 2 stretches are compositionally biased toward acidic residues: residues S60–D77 and E94–E103. The Q motif signature appears at K115–T143. The region spanning I146 to V318 is the Helicase ATP-binding domain. Residue A159 to T166 coordinates ATP. The DEAD box signature appears at D265–D268. In terms of domain architecture, Helicase C-terminal spans Y342–M490. Positions V504 to K515 are enriched in basic and acidic residues. Residues V504–G546 are disordered. Over residues G519–G530 the composition is skewed to gly residues. A compositionally biased stretch (basic and acidic residues) spans G536–G546.

It belongs to the DEAD box helicase family. DDX47/RRP3 subfamily. Interacts with the SSU processome.

It is found in the nucleus. It carries out the reaction ATP + H2O = ADP + phosphate + H(+). Functionally, ATP-dependent rRNA helicase required for pre-ribosomal RNA processing. Involved in the maturation of the 35S-pre-rRNA and to its cleavage to mature 18S rRNA. This Phaeosphaeria nodorum (strain SN15 / ATCC MYA-4574 / FGSC 10173) (Glume blotch fungus) protein is ATP-dependent rRNA helicase RRP3.